Reading from the N-terminus, the 243-residue chain is Zinc import ATP-binding protein ZnuC 2 (243 aa).

The ABC transporter domain maps to 3–218 (LSLHQLSVKF…PEYKVLFGLD (216 aa)). 35–42 (GPNGSGKS) serves as a coordination point for ATP.

This sequence belongs to the ABC transporter superfamily. Zinc importer (TC 3.A.1.15.5) family. As to quaternary structure, the complex is composed of two ATP-binding proteins (ZnuC), two transmembrane proteins (ZnuB) and a solute-binding protein (ZnuA).

It localises to the cell inner membrane. The enzyme catalyses Zn(2+)(out) + ATP(in) + H2O(in) = Zn(2+)(in) + ADP(in) + phosphate(in) + H(+)(in). Its function is as follows. Part of the ABC transporter complex ZnuABC involved in zinc import. Responsible for energy coupling to the transport system. The protein is Zinc import ATP-binding protein ZnuC 2 of Aliivibrio fischeri (strain ATCC 700601 / ES114) (Vibrio fischeri).